Consider the following 157-residue polypeptide: Protein NrdI (157 aa).

This sequence belongs to the NrdI family.

In terms of biological role, probably involved in ribonucleotide reductase function. In Mycoplasma capricolum subsp. capricolum (strain California kid / ATCC 27343 / NCTC 10154), this protein is Protein NrdI.